A 479-amino-acid polypeptide reads, in one-letter code: MKRLLLVLCYITLLAGCQKVVVEQEKTTPPLKPTQLIVGTLYGPQIYFTSGQGDSGYDYEMAERFANYLDLELKMKPFANISELYSAMHSGEIDIIAAGLADTPARREQFRLGPPLYRVNQVLVYRQGTPIPRSVDTLKGEITVTTDSSFVDTLTELQKSNPDLVWNQEKDKDAEELLTMIAAGEIPYTIADSTSLDINRRFMPELREGLVLKRKQPVVWLLPPTNSDKLMSELLSFWHIEKRSGTLAHLNEKYFAHVERFDYVDTRAFIRAIDNKLPKYQATFEKYAEGIDWRKLAATAYQESHWNPNARSPTGVRGLMMLTLPTAKQVGIKNRLDPYQSIKGGAKYLNSMLERLPDSIPESQRMWFALASYNIGLGHVEDARKLAQSQGLNPSAWRDVKSVLPLLQKRKYYQKTRYGYARGNEAVHYVDSIRRYYDTLVWIDNQNMLLELKQKPLQTAEAKETEEKPQTDAIQPQQP.

Residues 1–15 (MKRLLLVLCYITLLA) form the signal peptide. The segment at 16 to 258 (GCQKVVVEQE…HLNEKYFAHV (243 aa)) is non-LT domain. Positions 260–479 (RFDYVDTRAF…QTDAIQPQQP (220 aa)) are LT domain. Residue Glu-303 is part of the active site. The tract at residues 457-479 (LQTAEAKETEEKPQTDAIQPQQP) is disordered. Positions 461-470 (EAKETEEKPQ) are enriched in basic and acidic residues.

The protein in the N-terminal section; belongs to the bacterial solute-binding protein 3 family. It in the C-terminal section; belongs to the transglycosylase Slt family.

It localises to the cell outer membrane. The enzyme catalyses Exolytic cleavage of the (1-&gt;4)-beta-glycosidic linkage between N-acetylmuramic acid (MurNAc) and N-acetylglucosamine (GlcNAc) residues in peptidoglycan, from either the reducing or the non-reducing ends of the peptidoglycan chains, with concomitant formation of a 1,6-anhydrobond in the MurNAc residue.. In terms of biological role, murein-degrading enzyme that degrades murein glycan strands and insoluble, high-molecular weight murein sacculi, with the concomitant formation of a 1,6-anhydromuramoyl product. Lytic transglycosylases (LTs) play an integral role in the metabolism of the peptidoglycan (PG) sacculus. Their lytic action creates space within the PG sacculus to allow for its expansion as well as for the insertion of various structures such as secretion systems and flagella. The polypeptide is Membrane-bound lytic murein transglycosylase F (Shewanella pealeana (strain ATCC 700345 / ANG-SQ1)).